Reading from the N-terminus, the 165-residue chain is 3-isopropylmalate dehydratase small subunit (165 aa).

The protein belongs to the LeuD family. LeuD type 2 subfamily. In terms of assembly, heterodimer of LeuC and LeuD.

It carries out the reaction (2R,3S)-3-isopropylmalate = (2S)-2-isopropylmalate. It functions in the pathway amino-acid biosynthesis; L-leucine biosynthesis; L-leucine from 3-methyl-2-oxobutanoate: step 2/4. Its function is as follows. Catalyzes the isomerization between 2-isopropylmalate and 3-isopropylmalate, via the formation of 2-isopropylmaleate. The protein is 3-isopropylmalate dehydratase small subunit of Saccharolobus islandicus (strain M.16.27) (Sulfolobus islandicus).